The chain runs to 454 residues: Bifunctional protein GlmU (454 aa).

The pyrophosphorylase stretch occupies residues 1 to 226 (MSLNVVILAA…PIETEGANNR (226 aa)). UDP-N-acetyl-alpha-D-glucosamine contacts are provided by residues 8 to 11 (LAAG), lysine 22, glutamine 73, 78 to 79 (GT), 100 to 102 (YGD), glycine 137, glutamate 151, asparagine 166, and asparagine 224. Residue aspartate 102 participates in Mg(2+) binding. Asparagine 224 is a binding site for Mg(2+). A linker region spans residues 227 to 247 (VQLAALERAYQARRAEELMLA). Residues 248 to 454 (GANLRDPARI…GWQRPVKKPK (207 aa)) are N-acetyltransferase. UDP-N-acetyl-alpha-D-glucosamine is bound by residues arginine 330 and lysine 348. The active-site Proton acceptor is histidine 360. Residues tyrosine 363 and asparagine 374 each coordinate UDP-N-acetyl-alpha-D-glucosamine. Acetyl-CoA-binding positions include alanine 377, 383-384 (NY), serine 402, alanine 420, and arginine 437.

This sequence in the N-terminal section; belongs to the N-acetylglucosamine-1-phosphate uridyltransferase family. It in the C-terminal section; belongs to the transferase hexapeptide repeat family. As to quaternary structure, homotrimer. The cofactor is Mg(2+).

The protein localises to the cytoplasm. It carries out the reaction alpha-D-glucosamine 1-phosphate + acetyl-CoA = N-acetyl-alpha-D-glucosamine 1-phosphate + CoA + H(+). It catalyses the reaction N-acetyl-alpha-D-glucosamine 1-phosphate + UTP + H(+) = UDP-N-acetyl-alpha-D-glucosamine + diphosphate. It functions in the pathway nucleotide-sugar biosynthesis; UDP-N-acetyl-alpha-D-glucosamine biosynthesis; N-acetyl-alpha-D-glucosamine 1-phosphate from alpha-D-glucosamine 6-phosphate (route II): step 2/2. Its pathway is nucleotide-sugar biosynthesis; UDP-N-acetyl-alpha-D-glucosamine biosynthesis; UDP-N-acetyl-alpha-D-glucosamine from N-acetyl-alpha-D-glucosamine 1-phosphate: step 1/1. It participates in bacterial outer membrane biogenesis; LPS lipid A biosynthesis. Its function is as follows. Catalyzes the last two sequential reactions in the de novo biosynthetic pathway for UDP-N-acetylglucosamine (UDP-GlcNAc). The C-terminal domain catalyzes the transfer of acetyl group from acetyl coenzyme A to glucosamine-1-phosphate (GlcN-1-P) to produce N-acetylglucosamine-1-phosphate (GlcNAc-1-P), which is converted into UDP-GlcNAc by the transfer of uridine 5-monophosphate (from uridine 5-triphosphate), a reaction catalyzed by the N-terminal domain. The protein is Bifunctional protein GlmU of Shewanella amazonensis (strain ATCC BAA-1098 / SB2B).